The chain runs to 197 residues: FMN-dependent NADH:quinone oxidoreductase (197 aa).

FMN contacts are provided by residues Ser10, 16 to 18 (SQS), 93 to 96 (MYNF), and 137 to 140 (TRGG).

It belongs to the azoreductase type 1 family. Homodimer. It depends on FMN as a cofactor.

It carries out the reaction 2 a quinone + NADH + H(+) = 2 a 1,4-benzosemiquinone + NAD(+). It catalyses the reaction N,N-dimethyl-1,4-phenylenediamine + anthranilate + 2 NAD(+) = 2-(4-dimethylaminophenyl)diazenylbenzoate + 2 NADH + 2 H(+). Quinone reductase that provides resistance to thiol-specific stress caused by electrophilic quinones. Its function is as follows. Also exhibits azoreductase activity. Catalyzes the reductive cleavage of the azo bond in aromatic azo compounds to the corresponding amines. In Shewanella denitrificans (strain OS217 / ATCC BAA-1090 / DSM 15013), this protein is FMN-dependent NADH:quinone oxidoreductase.